Consider the following 791-residue polypeptide: Endonuclease MutS2 (791 aa).

Residue 339–346 coordinates ATP; the sequence is GPNTGGKT. The Smr domain maps to 715 to 790; sequence LDLRGERYET…GSGVTIADLK (76 aa).

This sequence belongs to the DNA mismatch repair MutS family. MutS2 subfamily. As to quaternary structure, homodimer. Binds to stalled ribosomes, contacting rRNA.

Functionally, endonuclease that is involved in the suppression of homologous recombination and thus may have a key role in the control of bacterial genetic diversity. Acts as a ribosome collision sensor, splitting the ribosome into its 2 subunits. Detects stalled/collided 70S ribosomes which it binds and splits by an ATP-hydrolysis driven conformational change. Acts upstream of the ribosome quality control system (RQC), a ribosome-associated complex that mediates the extraction of incompletely synthesized nascent chains from stalled ribosomes and their subsequent degradation. Probably generates substrates for RQC. The chain is Endonuclease MutS2 from Halothermothrix orenii (strain H 168 / OCM 544 / DSM 9562).